We begin with the raw amino-acid sequence, 356 residues long: MASNNNICAYELIEAEAQSWDYILSYLRPSCIKCAIQLGIPDILHKNADPIMSLSDLIAALPNLNPSKTTFIPILMRVLVDFGLFNYHQQQGDGYSLTTVGRLLVENHHFGNRSFFLFAQHPVVLNTAASVGDWLKDDLRTAFETADGKSHWDYCGADPEFNGVFNDAMAGDSRLMSNLLISDCCAGVFEGLTSLVDIGGGTGAVAMAIAGAFPSLKCIVLDLPHVIADRKGSGNLEFVAGSMFDKIPHANAILLKWILHNWDDEDCVKLLKKCKESISSRENGGKVIIIDMIMEDNYNNKQLVQSQHLMDLIMRITYASKERTEKEWEKLFLEAGFSGYKIITSLGLRSLIEIYP.

Asp222 lines the S-adenosyl-L-methionine pocket. The active-site Proton acceptor is the His260.

Belongs to the class I-like SAM-binding methyltransferase superfamily. Cation-independent O-methyltransferase family. In terms of assembly, homodimer.

The enzyme catalyses quercetin + S-adenosyl-L-methionine = rhamnetin + S-adenosyl-L-homocysteine + H(+). It catalyses the reaction kaempferol + S-adenosyl-L-methionine = kaempferide + S-adenosyl-L-homocysteine + H(+). The catalysed reaction is myricetin + S-adenosyl-L-methionine = 7-O-methylmyricetin + S-adenosyl-L-homocysteine + H(+). It carries out the reaction kaempferide + S-adenosyl-L-methionine = 7,4'-O-dimethylkaempferol + S-adenosyl-L-homocysteine + H(+). The enzyme catalyses isorhamnetin + S-adenosyl-L-methionine = 3',4'-O-dimethylquercetin + S-adenosyl-L-homocysteine + 2 H(+). It catalyses the reaction 3',4',5,7-tetrahydroxy-3-methoxyflavone + S-adenosyl-L-methionine = 3',4',5-trihydroxy-3,7-dimethoxyflavone + S-adenosyl-L-homocysteine + H(+). The catalysed reaction is rhamnetin + S-adenosyl-L-methionine = 7,4'-O-dimethylquercetin + S-adenosyl-L-homocysteine + H(+). It carries out the reaction syringetin + S-adenosyl-L-methionine = 7,3',5'-O-trimethylmyricetin + S-adenosyl-L-homocysteine + H(+). The enzyme catalyses 3',4',5'-O-trimethylmyricetin + S-adenosyl-L-methionine = 7,3',4',5'-O-tetramethylmyricetin + S-adenosyl-L-homocysteine. Its pathway is flavonoid metabolism. Flavonoid 7/4'-O-methyltransferase involved in the biosynthesis of polymethoxylated flavonoids natural products such as myricetin derivatives, aroma compounds possessing antioxidant properties and exhibiting pharmacological activities such as anti-carcinogen, anti-viral, anti-thrombotic, anti-diabetic, anti-atherosclerotic, and anti-inflammatory effects. Catalyzes S-adenosylmethionine-dependent regioselective 7/4'-O-methylation of flavonoids; active on various hydroxylated flavonoid substrates. The polypeptide is Myricetin 7/4'-O-methyltransferase 2 (Solanum lycopersicum (Tomato)).